A 253-amino-acid chain; its full sequence is MASSSNWLSGVNVVLVMAYGSLVFVLLFIFVKRQIMRFAMKSRRGPHVPVGHNAPKDLKEEIDIRLSRVQDIKYEPQLLADDDTRLLQLETQGNQSCYNYLYRMKALDAIRASEIPFHAEGRHPCSLMGKNFRSYLLDLRNTSTPFKGVGKALIDTLLDGYETARYGTGVFGQSEYLRYQEALSELATVVKARIGSSQRQHQSAAKDLTQSPEMSPTTIQVTYLPSSQKSKRPKHFLELKSFKDNYNTLESTL.

Residues 11-31 form a helical membrane-spanning segment; the sequence is VNVVLVMAYGSLVFVLLFIFV.

The protein resides in the membrane. Its subcellular location is the golgi apparatus. It localises to the mitochondrion. In terms of biological role, general regulator of phagocytosis. Required to uptake Gram negative bacterium by macrophages. In Mus musculus (Mouse), this protein is Protein C1orf43 homolog.